Reading from the N-terminus, the 207-residue chain is Guanylate kinase (207 aa).

The Guanylate kinase-like domain occupies 6 to 185 (GLLIVLSGPS…AKERIQSIVE (180 aa)). 13–20 (GPSGVGKG) provides a ligand contact to ATP.

It belongs to the guanylate kinase family.

Its subcellular location is the cytoplasm. It catalyses the reaction GMP + ATP = GDP + ADP. In terms of biological role, essential for recycling GMP and indirectly, cGMP. The protein is Guanylate kinase of Staphylococcus haemolyticus (strain JCSC1435).